The primary structure comprises 446 residues: Neuropeptide Y receptor type 5 (446 aa).

Over 1-42 the chain is Extracellular; sequence MDLELQDFYNKTLATENNTAATRNSDFPVWDDYKSSVDDLQY. Asn-10 and Asn-17 each carry an N-linked (GlcNAc...) asparagine glycan. The helical transmembrane segment at 43–63 threads the bilayer; that stretch reads FLIGLYTFVSLLGFMGNLLIL. Residues 64 to 77 lie on the Cytoplasmic side of the membrane; it reads MALMRKRNQKTMVN. A helical membrane pass occupies residues 78 to 98; the sequence is FLIGNLAFSDILVVLFCSPFT. At 99-117 the chain is on the extracellular side; it reads LTSVLLDQWMFGKVMCHIM. Cys-114 and Cys-198 form a disulfide bridge. The helical transmembrane segment at 118–138 threads the bilayer; sequence PFLQCVSVLVSTLILISIAIV. At 139-156 the chain is on the cytoplasmic side; that stretch reads RYHMIKHPISNNLTANHG. The helical transmembrane segment at 157–177 threads the bilayer; it reads YFLIATVWTLGFAICSPLPVF. Residues 178-208 are Extracellular-facing; the sequence is HSLVELQETFDSALLSSRYLCVESWPSDSYR. Residues 209–229 traverse the membrane as a helical segment; that stretch reads IAFTISLLLVQYILPLVCLTV. The Cytoplasmic portion of the chain corresponds to 230–369; it reads SHTSVCRSIS…KKRSRSVFYR (140 aa). Residues 370–390 form a helical membrane-spanning segment; the sequence is LTILILVFAVSWMPLHLFHVV. Residues 391–407 are Extracellular-facing; that stretch reads TDFNDNLISNRHFKLVY. The chain crosses the membrane as a helical span at residues 408–428; it reads CICHLLGMMSCCLNPILYGFL. Residues 429-446 are Cytoplasmic-facing; that stretch reads NNGIKADLISLIQCLHMS. Cys-442 carries the S-palmitoyl cysteine lipid modification.

This sequence belongs to the G-protein coupled receptor 1 family.

It is found in the cell membrane. Its function is as follows. Receptor for neuropeptide Y and peptide YY. The activity of this receptor is mediated by G proteins that inhibit adenylate cyclase activity. Seems to be associated with food intake. Could be involved in feeding disorders. In Canis lupus familiaris (Dog), this protein is Neuropeptide Y receptor type 5 (NPY5R).